Consider the following 375-residue polypeptide: Adiponectin receptor protein 1 (375 aa).

A disordered region spans residues 1 to 60 (MSSHKGSAGAQGNGAPSGNREADTVELAELGPLLEEKGKRAASSPAKAEEDQACPVPQEE). Residues 1-136 (MSSHKGSAGA…SIFRIHTETG (136 aa)) lie on the Cytoplasmic side of the membrane. Residues 137 to 157 (NIWTHLLGFVLFLFLGILTML) traverse the membrane as a helical segment. Residues 158-170 (RPNMYFMAPLQEK) lie on the Extracellular side of the membrane. The helical transmembrane segment at 171 to 191 (VVFGMFFLGAVLCLSFSWLFH) threads the bilayer. Position 191 (histidine 191) interacts with Zn(2+). Over 192–203 (TVYCHSEKVSRT) the chain is Cytoplasmic. The chain crosses the membrane as a helical span at residues 204–224 (FSKLDYSGIALLIMGSFVPWL). Over 225–234 (YYSFYCSPQP) the chain is Extracellular. The chain crosses the membrane as a helical span at residues 235–255 (RLIYLSIVCVLGISAIIVAQW). Over 256-264 (DRFATPKHR) the chain is Cytoplasmic. Residues 265-285 (QTRAGVFLGLGLSGVVPTMHF) traverse the membrane as a helical segment. The Extracellular portion of the chain corresponds to 286 to 298 (TIAEGFVKATTVG). The chain crosses the membrane as a helical span at residues 299–319 (QMGWFFLMAVMYITGAGLYAA). Residues 320-337 (RIPERFFPGKFDIWFQSH) lie on the Cytoplasmic side of the membrane. Zn(2+)-binding residues include histidine 337 and histidine 341. Residues 338-358 (QIFHVLVVAAAFVHFYGVSNL) traverse the membrane as a helical segment. At 359 to 375 (QEFRYGLEGGCTDDSLL) the chain is on the extracellular side.

The protein belongs to the ADIPOR family. As to quaternary structure, may form homooligomers and heterooligomers with ADIPOR2. Interacts with APPL2 (via BAR domain); hinders the accessibility of APPL1 to ADIPOR1; negatively regulates adiponectin signaling; ADIPOQ dissociates this interaction and facilitates the recruitment of APPL1 to ADIPOR1. Interacts with APPL1; ADIPOQ enhances this interaction; inhibites adiponectin-stimulated binding of APPL2 to ADIPOR1. As to expression, detected in brain and quadriceps muscle (at protein level). Widely expressed. Expressed in heart, kidney, liver, lung, skeletal muscle, white adipose tissue, brown adipose tissue, aorta and spleen. Weakly expressed in brain and testis.

Its subcellular location is the cell membrane. In terms of biological role, receptor for ADIPOQ, an essential hormone secreted by adipocytes that regulates glucose and lipid metabolism. Required for normal glucose and fat homeostasis and for maintaining a normal body weight. ADIPOQ-binding activates a signaling cascade that leads to increased AMPK activity, and ultimately to increased fatty acid oxidation, increased glucose uptake and decreased gluconeogenesis. Has high affinity for globular adiponectin and low affinity for full-length adiponectin. In Mus musculus (Mouse), this protein is Adiponectin receptor protein 1.